The following is a 603-amino-acid chain: DNA ligase (603 aa).

Residue glutamate 262 coordinates ATP. The active-site N6-AMP-lysine intermediate is lysine 264. 6 residues coordinate ATP: arginine 269, arginine 285, glutamate 315, phenylalanine 355, arginine 432, and lysine 438.

Belongs to the ATP-dependent DNA ligase family. Requires Mg(2+) as cofactor.

It catalyses the reaction ATP + (deoxyribonucleotide)n-3'-hydroxyl + 5'-phospho-(deoxyribonucleotide)m = (deoxyribonucleotide)n+m + AMP + diphosphate.. Its function is as follows. DNA ligase that seals nicks in double-stranded DNA during DNA replication, DNA recombination and DNA repair. The sequence is that of DNA ligase from Caldivirga maquilingensis (strain ATCC 700844 / DSM 13496 / JCM 10307 / IC-167).